Consider the following 150-residue polypeptide: D-aminoacyl-tRNA deacylase (150 aa).

Positions 138-139 (GP) match the Gly-cisPro motif, important for rejection of L-amino acids motif.

Belongs to the DTD family. Homodimer.

It localises to the cytoplasm. The catalysed reaction is glycyl-tRNA(Ala) + H2O = tRNA(Ala) + glycine + H(+). It carries out the reaction a D-aminoacyl-tRNA + H2O = a tRNA + a D-alpha-amino acid + H(+). In terms of biological role, an aminoacyl-tRNA editing enzyme that deacylates mischarged D-aminoacyl-tRNAs. Also deacylates mischarged glycyl-tRNA(Ala), protecting cells against glycine mischarging by AlaRS. Acts via tRNA-based rather than protein-based catalysis; rejects L-amino acids rather than detecting D-amino acids in the active site. By recycling D-aminoacyl-tRNA to D-amino acids and free tRNA molecules, this enzyme counteracts the toxicity associated with the formation of D-aminoacyl-tRNA entities in vivo and helps enforce protein L-homochirality. This chain is D-aminoacyl-tRNA deacylase, found in Akkermansia muciniphila (strain ATCC BAA-835 / DSM 22959 / JCM 33894 / BCRC 81048 / CCUG 64013 / CIP 107961 / Muc).